The primary structure comprises 528 residues: GMP synthase [glutamine-hydrolyzing] (528 aa).

The region spanning 13 to 204 is the Glutamine amidotransferase type-1 domain; it reads AIVILDFGSQ…VYDICSCEPD (192 aa). Cys90 (nucleophile) is an active-site residue. Residues His178 and Glu180 contribute to the active site. The region spanning 205 to 403 is the GMPS ATP-PPase domain; it reads WTTNLFIDEA…LGLPDEIVRR (199 aa). Residue 232 to 238 participates in ATP binding; it reads SGGVDSS.

As to quaternary structure, homodimer.

It carries out the reaction XMP + L-glutamine + ATP + H2O = GMP + L-glutamate + AMP + diphosphate + 2 H(+). It participates in purine metabolism; GMP biosynthesis; GMP from XMP (L-Gln route): step 1/1. Functionally, catalyzes the synthesis of GMP from XMP. The chain is GMP synthase [glutamine-hydrolyzing] from Prochlorococcus marinus (strain NATL1A).